The sequence spans 360 residues: Phospho-N-acetylmuramoyl-pentapeptide-transferase (360 aa).

The next 10 helical transmembrane spans lie at 26–46 (AIVS…RMIA), 72–92 (PTMG…LWAY), 94–114 (SNPY…IGFV), 132–152 (WKYF…YLAG), 168–188 (VMPQ…VGTG), 199–219 (GLAI…AWAT), 236–256 (AGEL…FLWF), 263–283 (VFMG…IAVL), 288–308 (FLLV…ILQV), and 338–358 (VIVR…ATLK).

Belongs to the glycosyltransferase 4 family. MraY subfamily. Mg(2+) is required as a cofactor.

Its subcellular location is the cell inner membrane. The catalysed reaction is UDP-N-acetyl-alpha-D-muramoyl-L-alanyl-gamma-D-glutamyl-meso-2,6-diaminopimeloyl-D-alanyl-D-alanine + di-trans,octa-cis-undecaprenyl phosphate = di-trans,octa-cis-undecaprenyl diphospho-N-acetyl-alpha-D-muramoyl-L-alanyl-D-glutamyl-meso-2,6-diaminopimeloyl-D-alanyl-D-alanine + UMP. Its pathway is cell wall biogenesis; peptidoglycan biosynthesis. Functionally, catalyzes the initial step of the lipid cycle reactions in the biosynthesis of the cell wall peptidoglycan: transfers peptidoglycan precursor phospho-MurNAc-pentapeptide from UDP-MurNAc-pentapeptide onto the lipid carrier undecaprenyl phosphate, yielding undecaprenyl-pyrophosphoryl-MurNAc-pentapeptide, known as lipid I. In Klebsiella pneumoniae subsp. pneumoniae (strain ATCC 700721 / MGH 78578), this protein is Phospho-N-acetylmuramoyl-pentapeptide-transferase.